The primary structure comprises 74 residues: Conotoxin AbVIL (74 aa).

The signal sequence occupies residues V1–A17. The disordered stretch occupies residues A17 to K41. The propeptide occupies E18–T40. Residues S21–S37 are compositionally biased toward basic and acidic residues. 3 disulfide bridges follow: C43-C57, C50-C61, and C56-C68.

This sequence belongs to the conotoxin O1 superfamily. Expressed by the venom duct.

The protein resides in the secreted. In Conus abbreviatus (Abbreviated cone), this protein is Conotoxin AbVIL.